Reading from the N-terminus, the 40-residue chain is Large ribosomal subunit protein bL36A (40 aa).

This sequence belongs to the bacterial ribosomal protein bL36 family.

This chain is Large ribosomal subunit protein bL36A, found in Saccharopolyspora erythraea (strain ATCC 11635 / DSM 40517 / JCM 4748 / NBRC 13426 / NCIMB 8594 / NRRL 2338).